A 201-amino-acid chain; its full sequence is Syndecan-2 (201 aa).

An N-terminal signal peptide occupies residues 1 to 18; sequence MRRAWILLTLGLVACVSA. The Extracellular segment spans residues 19–144; the sequence is ESRAELTSDK…HSDSLFKRTE (126 aa). O-linked (Xyl...) (glycosaminoglycan) serine glycans are attached at residues Ser-41, Ser-55, and Ser-57. Disordered stretches follow at residues 42–70 and 90–130; these read GVYP…ELTT and TLNI…DTNV. The segment covering 90-102 has biased composition (polar residues); sequence TLNIQNKIPAQTK. O-linked (GalNAc...) threonine glycosylation occurs at Thr-101. The segment covering 103-123 has biased composition (basic and acidic residues); it reads SPEETDKEKVHLSDSERKMDP. Residue Ser-115 is modified to Phosphoserine; by FAM20C. A helical membrane pass occupies residues 145-169; sequence VLAAVIAGGVIGFLFAIFLILLLVY. Over 170 to 201 the chain is Cytoplasmic; sequence RMRKKDEGSYDLGERKPSSAAYQKAPTKEFYA. The tract at residues 178–201 is disordered; sequence SYDLGERKPSSAAYQKAPTKEFYA. Residue Ser-187 is modified to Phosphoserine.

It belongs to the syndecan proteoglycan family. In terms of assembly, interacts (via cytoplasmic domain) with SARM1. Forms a complex with SDCBP and PDCD6IP. O-glycosylated with core 1 or possibly core 8 glycans. Contains heparan sulfate. Also contains chondroitin sulfate.

The protein localises to the membrane. Its function is as follows. Cell surface proteoglycan which regulates dendritic arbor morphogenesis. This Homo sapiens (Human) protein is Syndecan-2 (SDC2).